The sequence spans 840 residues: Homeobox-leucine zipper protein HOX9 (840 aa).

Disordered stretches follow at residues 1–26 (MAAA…AGMD) and 135–160 (NPSL…DASN). Positions 12-21 (GSDGGGGGYD) are enriched in gly residues. The segment at residues 26–89 (DSGKYVRYTP…NRRCRDKQRK (64 aa)) is a DNA-binding region (homeobox). A coiled-coil region spans residues 86–135 (KQRKEASRLQAVNRKLTAMNKLLMEENERLQKQVSQLVHENAYMKQQLQN). Positions 157–385 (DASNPSGLLT…IAQETSGEVV (229 aa)) constitute an START domain.

It belongs to the HD-ZIP homeobox family. Class III subfamily. As to expression, expressed in seedlings, roots, stems, leaf sheaths and blades and panicles.

The protein resides in the nucleus. In terms of biological role, probable transcription factor. This chain is Homeobox-leucine zipper protein HOX9 (HOX9), found in Oryza sativa subsp. indica (Rice).